The primary structure comprises 446 residues: Phosphoglucosamine mutase (446 aa).

The active-site Phosphoserine intermediate is the serine 101. Mg(2+)-binding residues include serine 101, aspartate 240, aspartate 242, and aspartate 244. Serine 101 carries the post-translational modification Phosphoserine.

This sequence belongs to the phosphohexose mutase family. Mg(2+) is required as a cofactor. Post-translationally, activated by phosphorylation.

The enzyme catalyses alpha-D-glucosamine 1-phosphate = D-glucosamine 6-phosphate. Its function is as follows. Catalyzes the conversion of glucosamine-6-phosphate to glucosamine-1-phosphate. The protein is Phosphoglucosamine mutase of Pseudomonas putida (strain ATCC 700007 / DSM 6899 / JCM 31910 / BCRC 17059 / LMG 24140 / F1).